The primary structure comprises 496 residues: Glycerol kinase (496 aa).

An ADP-binding site is contributed by Thr12. Positions 12, 13, and 14 each coordinate ATP. Position 12 (Thr12) interacts with sn-glycerol 3-phosphate. Residue Arg16 coordinates ADP. The sn-glycerol 3-phosphate site is built by Arg82, Glu83, and Tyr134. Positions 82, 83, and 134 each coordinate glycerol. Phosphohistidine; by HPr is present on His230. Position 244 (Asp244) interacts with sn-glycerol 3-phosphate. The glycerol site is built by Asp244 and Gln245. 2 residues coordinate ADP: Thr266 and Gly309. Residues Thr266, Gly309, Gln313, and Gly410 each contribute to the ATP site. Gly410 and Asn414 together coordinate ADP.

Belongs to the FGGY kinase family. In terms of assembly, homotetramer and homodimer (in equilibrium). Post-translationally, the phosphoenolpyruvate-dependent sugar phosphotransferase system (PTS), including enzyme I, and histidine-containing protein (HPr) are required for the phosphorylation, which leads to the activation of the enzyme.

The enzyme catalyses glycerol + ATP = sn-glycerol 3-phosphate + ADP + H(+). It participates in polyol metabolism; glycerol degradation via glycerol kinase pathway; sn-glycerol 3-phosphate from glycerol: step 1/1. Activated by phosphorylation and inhibited by fructose 1,6-bisphosphate (FBP). Its function is as follows. Key enzyme in the regulation of glycerol uptake and metabolism. Catalyzes the phosphorylation of glycerol to yield sn-glycerol 3-phosphate. The chain is Glycerol kinase from Bacillus thuringiensis (strain Al Hakam).